We begin with the raw amino-acid sequence, 100 residues long: uncharacterized protein (100 aa).

An Isoglutamyl lysine isopeptide (Lys-Gln) (interchain with Q-Cter in protein Pup) cross-link involves residue K98.

This is an uncharacterized protein from Mycobacterium tuberculosis (strain CDC 1551 / Oshkosh).